We begin with the raw amino-acid sequence, 65 residues long: Large ribosomal subunit protein bL35 (65 aa).

The tract at residues 1–51 (MPKIKTNRGAAKRFRKSASGRVKRGNAFTSHILTHKTRKNKRNLRGTSMVS) is disordered. 2 stretches are compositionally biased toward basic residues: residues 10–24 (AAKR…RVKR) and 33–44 (LTHKTRKNKRNL).

This sequence belongs to the bacterial ribosomal protein bL35 family.

The sequence is that of Large ribosomal subunit protein bL35 from Pelobacter propionicus (strain DSM 2379 / NBRC 103807 / OttBd1).